The chain runs to 1189 residues: MAAGNVNPFNVSDSEEEAEQRQDGADTERSPSDEAQGHSLGPFSPPAYSDPAALLSSNRTSPSVDGIPASAAAVSGIGAETRVSLDAIAAQLLRDQYILTALELHTELLEAGRELPRLRDYFSNPGNFERQSGTPPACKEQGVGPGGPLNRAGSISTLDSLDFARYSDDGNRESDERVAVLEFELRKAKETIQALRANLTQAAECEIASQERKNYKSSPETQEPIRPLEKRALNFLVNEYLLKNEYKLTSITFSDENDDQDFELWDDVGLNIPKPPDLLQLYRNCGNSQPLHRDTVDVAVSVDPSDLPADYFTQEPVQQTDVIQQQQQQEVVQELEYQISLLNSEKQSLAEQIKKLQSDIQALQRNVSSELTAGVKSIQSKENPKCDKPPLDNGQYLDIRGVTETDSSSDTTKTSTSTTIATDCTENSTTATQPHSKLKANGQQSKSSVQFDQPNRKLSPAFHQALLSFCRMSADSRLGSEVSRIADSEQSVMLMLGRCLPHIVPNVLLAKREELIPLILCTACLHPEPKERDQLLHILFNLIKRPDDEQRQMILTGCVAFAQHVGPTRVEAELLPQCWEQINHKYPERRLLVAEACGALAPYLPKEIRSSLVLSMLQQMLADDKADMVREAVVKSLGVIMGYIDDPDKYSQGFELMLLSLGDPSERVVSATHQVFIPAFAAWCTELGNLQSQLIPSLLTRIEKLLKQGEYGLDEHKLHMYLSALQSLIPSLFAVLLQNAPFTSRVKLQGDVPPIEVTRFPRPASPLQDVATIVGSREQLAVLLHLYDHQLQHEGTTGWDSLLWVVNQFLPQIIDIVGRINVTSSTCVHEFSRFFWRLCRTFGKIFTNTKVKPQFQEILRLSEENVDATAGNGILTKATVPIYATGVLTCYNQEEDRKLLVGFLEDVMTTLSLSHAPLDSLKASFVELGANPAYHELLLTVLWYGVVHTSALVRCTAARMFELLVKGVNETLVAQRVVPALITLSSDPEISVRISTIPAFGTIMETVTQKELLERVKMQLASFLEDPQYQDQHSLHMEIIKTFGRVGPNAEPRFRDEFVLPHLHKLALCNNQQTVESKRIDIATQLFEAYSALSCCFISEELMVNHFLPGLRCLRTDMEQLSPEHEVILSSMIKECEIKVENKGIGEAQGSISIAASLVGEDAKTKFLSKMGQLTTSGAMLANVFQRKK.

Disordered stretches follow at residues Met1–Asp65 and Ser123–Ser154. Positions Glu19–Gln36 are enriched in basic and acidic residues. Positions Asn124–Thr134 are enriched in polar residues. Positions Arg172 to Cys205 form a coiled coil. Positions Glu229–Asp261 constitute a LisH domain. Positions Gln326–Ala373 form a coiled coil. A disordered region spans residues Gly374 to Gln453. Residues Glu404–Thr425 show a composition bias toward low complexity. A compositionally biased stretch (polar residues) spans Glu426–Gln453. HEAT repeat units follow at residues Leu574–Leu612, Val613–Gln652, and Val977–Arg1015.

Its subcellular location is the recycling endosome. The protein resides in the golgi apparatus. It is found in the trans-Golgi network. In terms of biological role, may regulate intracellular cholesterol transport. The chain is RAB11-binding protein RELCH homolog (relch) from Danio rerio (Zebrafish).